The chain runs to 424 residues: Histidine--tRNA ligase (424 aa).

It belongs to the class-II aminoacyl-tRNA synthetase family. In terms of assembly, homodimer.

The protein resides in the cytoplasm. It carries out the reaction tRNA(His) + L-histidine + ATP = L-histidyl-tRNA(His) + AMP + diphosphate + H(+). This chain is Histidine--tRNA ligase, found in Salmonella gallinarum (strain 287/91 / NCTC 13346).